A 790-amino-acid chain; its full sequence is MAKKVLLLSLYSAVLSTWFGFGYVQCKLPTSRSEIPNFDYTVAQQPDQSDACEQNEVCMVSVECILDAKKKAILKPCSTVPSVDGVCCPSSEYNGTSSRVQQNSEEHAADHLVLQAIHEGRREYDEKLRFEDEHRAVMTAKEKPEAMFHRMFLPGGLKTHGKEVVDAEEQANVYGHVFASRKYAELTNMTLKQRQGDRFARIPRAIRKRCLPPVPCNPHSRYRTIDGSCNNPLPDRTSWGMEGYPFDRVLEPAYEDGVWAPRIHSVTGNLLPSARVISVALFPDEYRPDPRLNILFMQMGQFISHDFTLSRGFTTKHGQAIECCTPNCTAPLFGPHRHFACFPIEVPPNDPFYSRFGVRCLNLVRIRLAQGPECQLGYAKQADLVTHFLDASTVYGSTNDVAAELRAFQQGRLKDSFPNGIELLPFARNRTACVPWARVCYEGGDIRTNQLLGLTMVHTLFMREHNRLAVGLSKINPHWDDERLYQEARRILIAEYQNVVYNEFLPILLGHERVQQLGLADPFDTYTNYYDPNLRPMTLAEVGAAAHRYGHSLVEGFFRFLTRESPPEDVFIKDIFNDPSKTLEPNSFDVMMFSFNQQPMEQMDRFLTYGLTRFLFKERKPFGSDLASLNIQRGRDFAVRPYNDYREWAGLGRITDFNQLGEVGALLAQVYESPDDVDLWPGGVLEPPAEGAVVGSTFVALLSAGYTRYKRADRYYFTNGPEVNPGAFTLQQLGEIRRTTLAGIICANADHKEDFYQAQEALRQSSADNVPVPCTRYDTVNLGLWREEGF.

The first 16 residues, 1-16 (MAKKVLLLSLYSAVLS), serve as a signal peptide directing secretion. Residues 17–209 (TWFGFGYVQC…ARIPRAIRKR (193 aa)) constitute a propeptide that is removed on maturation. Position 210 is an N-acetylcysteine; in Chorion peroxidase light chain (Cys-210). Residues Cys-216 and Cys-229 are joined by a disulfide bond. N-linked (Man) tryptophan glycosylation occurs at Trp-259. His-305 acts as the Proton acceptor in catalysis. A glycan (N-linked (GlcNAc...) asparagine) is linked at Asn-327. Tyr-353 bears the 3',4'-dihydroxyphenylalanine mark. A disulfide bond links Cys-433 and Cys-440. The N-linked (Man) tryptophan glycan is linked to Trp-479. Residue His-551 participates in heme b binding. Trp-680 is a glycosylation site (N-linked (Man) tryptophan). A disulfide bond links Cys-746 and Cys-774. A glycan (N-linked (Man) tryptophan) is linked at Trp-785.

It belongs to the peroxidase family. XPO subfamily. In terms of assembly, heterodimer. Heme b is required as a cofactor. N-glycosylated on Trp by mannose and on Asn by N-acetylglucosamine. In terms of processing, there is a hexose glycosylation of an unidentified residue between 654 and 708; Trp-680 is conserved in closely related species and is probably mannosylated.

The protein resides in the secreted. It catalyses the reaction 2 a phenolic donor + H2O2 = 2 a phenolic radical donor + 2 H2O. With respect to regulation, extremely resistant to denaturating agents, such as SDS and organic solvents. Functionally, involved in the formation of a rigid and insoluble egg chorion by catalyzing chorion protein cross-linking through dityrosine formation and phenol oxidase-catalyzed chorion melanization. The polypeptide is Chorion peroxidase (pxt) (Aedes aegypti (Yellowfever mosquito)).